Here is a 1082-residue protein sequence, read N- to C-terminus: Protein SPT23 (1082 aa).

Disordered stretches follow at residues 315-346 (NASN…PQSD), 376-417 (NNNN…FSDI), and 457-476 (ASAR…FMST). The segment covering 316-328 (ASNTTTPTSTSNA) has biased composition (low complexity). The span at 329-346 (QVSPMTNDTRSFSSPQSD) shows a compositional bias: polar residues. Low complexity-rich tracts occupy residues 376-391 (NNNN…KTNT) and 399-416 (HFPS…SFSD). At Ser-468 the chain carries Phosphoserine. One can recognise an IPT/TIG domain in the interval 508 to 585 (PSIQRVIPAQ…DPSETSMRNN (78 aa)). ANK repeat units follow at residues 709–738 (RGRT…HLND) and 742–771 (FGFT…NIMK).

In terms of biological role, dosage-dependent suppressor of Ty-induced promoter mutations. May exert its suppression effect through protein-protein interactions since does not present any of the motifs generally found in transcriptional activators or DNA binding proteins. This Saccharomyces cerevisiae (strain ATCC 204508 / S288c) (Baker's yeast) protein is Protein SPT23 (SPT23).